A 531-amino-acid chain; its full sequence is Isocitrate lyase (531 aa).

Position 101 to 103 (101 to 103 (SGW)) interacts with substrate. D184 lines the Mg(2+) pocket. C222 serves as the catalytic Proton acceptor. Substrate is bound by residues 223–224 (GH), 380–384 (NNSPS), and T451.

Belongs to the isocitrate lyase/PEP mutase superfamily. Isocitrate lyase family. Homotetramer. Requires Mg(2+) as cofactor.

It carries out the reaction D-threo-isocitrate = glyoxylate + succinate. The protein operates within carbohydrate metabolism; glyoxylate cycle; (S)-malate from isocitrate: step 1/2. Functionally, involved in the metabolic adaptation in response to environmental changes. Catalyzes the reversible formation of succinate and glyoxylate from isocitrate, a key step of the glyoxylate cycle, which operates as an anaplerotic route for replenishing the tricarboxylic acid cycle during growth on fatty acid substrates. The sequence is that of Isocitrate lyase from Pseudomonas aeruginosa (strain ATCC 15692 / DSM 22644 / CIP 104116 / JCM 14847 / LMG 12228 / 1C / PRS 101 / PAO1).